A 428-amino-acid chain; its full sequence is Serine--tRNA ligase (428 aa).

231-233 (TSE) is an L-serine binding site. ATP is bound by residues 262–264 (RRE) and V278. E285 contacts L-serine. Position 349 to 352 (349 to 352 (ELTS)) interacts with ATP. T384 contributes to the L-serine binding site.

The protein belongs to the class-II aminoacyl-tRNA synthetase family. Type-1 seryl-tRNA synthetase subfamily. Homodimer. The tRNA molecule binds across the dimer.

Its subcellular location is the cytoplasm. The catalysed reaction is tRNA(Ser) + L-serine + ATP = L-seryl-tRNA(Ser) + AMP + diphosphate + H(+). It carries out the reaction tRNA(Sec) + L-serine + ATP = L-seryl-tRNA(Sec) + AMP + diphosphate + H(+). Its pathway is aminoacyl-tRNA biosynthesis; selenocysteinyl-tRNA(Sec) biosynthesis; L-seryl-tRNA(Sec) from L-serine and tRNA(Sec): step 1/1. Functionally, catalyzes the attachment of serine to tRNA(Ser). Is also able to aminoacylate tRNA(Sec) with serine, to form the misacylated tRNA L-seryl-tRNA(Sec), which will be further converted into selenocysteinyl-tRNA(Sec). This chain is Serine--tRNA ligase, found in Bifidobacterium longum (strain DJO10A).